Consider the following 771-residue polypeptide: Polymeric immunoglobulin receptor (771 aa).

An N-terminal signal peptide occupies residues 1–18; that stretch reads MRLYLFTLLVTVFSGVST. The Extracellular segment spans residues 19–645; that stretch reads KSPIFGPQEV…DGQSRSSSSK (627 aa). The Ig-like V-type 1; required for binding to polymeric IgA and IgM domain maps to 21-120; it reads PIFGPQEVSS…GLGTSNRGLS (100 aa). The cysteines at positions 40 and 110 are disulfide-linked. Asn-90, Asn-147, Asn-170, and Asn-206 each carry an N-linked (GlcNAc...) asparagine glycan. Ig-like V-type domains lie at 135-237, 245-351, 352-457, and 463-563; these read SDTH…DLQV, LYKD…ESTI, PNRR…LQVA, and PNLE…IYIA. 3 disulfide bridges follow: Cys-152/Cys-220, Cys-257/Cys-324, and Cys-370/Cys-440. N-linked (GlcNAc...) asparagine glycosylation is found at Asn-420 and Asn-471. Cys-484 and Cys-546 are disulfide-bonded. The interval 622-641 is disordered; the sequence is QAQENRASGDAGSADGQSRS. Residues 627–641 are compositionally biased toward low complexity; it reads RASGDAGSADGQSRS. Residues 646–668 form a helical membrane-spanning segment; the sequence is VLFSTLVPLGLVLAVGAIAVWVA. Over 669–771 the chain is Cytoplasmic; it reads RVRHRKNVDR…AQVHDGPQEA (103 aa). Phosphoserine is present on residues Ser-680, Ser-689, Ser-696, and Ser-742.

As to quaternary structure, interacts (mainly via CDR1-like domain) with dimeric IgA. Interacts (mainly via CDR2-like domain) with pentameric IgM. In terms of assembly, either free or part of the secretory IgA (sIgA) complex that consists of two, four or five IgA monomers, and two additional non-Ig polypeptides, namely the JCHAIN and the secretory component (the proteolytic product of PIGR). Free secretory component interacts with bacterial antigens toxA of C.difficile and eae of E.coli. In terms of processing, N-glycosylated. N-glycosylation is required for anchoring IgA molecules to mucus, but is not necessary for Ig binding.

It localises to the cell membrane. The protein resides in the secreted. Its function is as follows. Mediates selective transcytosis of polymeric IgA and IgM across mucosal epithelial cells. Binds polymeric IgA and IgM at the basolateral surface of epithelial cells. The complex is then transported across the cell to be secreted at the apical surface. During this process, a cleavage occurs that separates the extracellular (known as the secretory component) from the transmembrane segment. Functionally, through its N-linked glycans ensures anchoring of secretory IgA (sIgA) molecules to mucus lining the epithelial surface to neutralize extracellular pathogens. On its own (free form) may act as a non-specific microbial scavenger to prevent pathogen interaction with epithelial cells. This chain is Polymeric immunoglobulin receptor (Pigr), found in Mus musculus (Mouse).